The chain runs to 232 residues: uncharacterized protein (232 aa).

2 disordered regions span residues 123–147 (VAGG…RKYP) and 169–200 (AAAD…PSLR).

The protein belongs to the mycobacterial PPE family.

This is an uncharacterized protein from Mycobacterium tuberculosis (strain ATCC 25618 / H37Rv).